The sequence spans 166 residues: Phospholipase A2 inhibitor B1 (166 aa).

Positions 1 to 19 (MRLILLSGLLLLGTFLVNG) are cleaved as a signal peptide. The 116-residue stretch at 46–161 (LFHAFLTVHK…CDDNLLVVCE (116 aa)) folds into the C-type lectin domain. Intrachain disulfides connect cysteine 83/cysteine 160 and cysteine 138/cysteine 152. A glycan (N-linked (GlcNAc...) asparagine) is linked at asparagine 122.

The protein belongs to the alpha-type phospholipase A2 inhibitor family. Homotrimer; non-covalently linked. As to expression, expressed by the liver.

It is found in the secreted. Functionally, this phospholipase A2 inhibitor binds directly phospholipase A2 in the presence or absence of calcium. The polypeptide is Phospholipase A2 inhibitor B1 (Crotalus durissus terrificus (South American rattlesnake)).